The following is a 65-amino-acid chain: Potassium channel toxin kappa-KTx 2.6 (65 aa).

A signal peptide spans 1 to 27 (MKTSKMICAFLLVLVVGTFNDISGAYG). A propeptide spanning residues 28-39 (EYVEDQHSFKIE) is cleaved from the precursor. Disulfide bonds link Cys-45–Cys-63 and Cys-49–Cys-59.

Belongs to the short scorpion toxin superfamily. Potassium channel inhibitor kappa-KTx family. Kappa-KTx 2 subfamily. Expressed by the venom gland.

It localises to the secreted. Functionally, potassium channel inhibitor (Kv). The chain is Potassium channel toxin kappa-KTx 2.6 from Opisthacanthus cayaporum (South American scorpion).